The sequence spans 525 residues: Nucleolar and spindle-associated protein 1-C (525 aa).

Disordered stretches follow at residues 43-203 (FYPE…KKLH), 250-293 (TPVS…FSAA), 373-398 (TPESEPKQMLPSVKKNEPMTTPEKAK), and 452-525 (LSRP…VPVQ). Polar residues predominate over residues 58–69 (SSLTDTDELNSS). Residues 82 to 92 (THRRGRGRKPL) are compositionally biased toward basic residues. Residues 93–102 (KNHDTPKDEF) are compositionally biased toward basic and acidic residues. The span at 113-127 (SLASETDNTQHQNCL) shows a compositional bias: polar residues. Over residues 160 to 169 (TTEKRQKKAS) the composition is skewed to basic and acidic residues. The span at 270 to 285 (PPTTGASPSRTPTNQR) shows a compositional bias: polar residues. Residues 476–494 (CGSNNNVSVLKNNFKQPHL) show a composition bias toward polar residues. Positions 495–514 (QTREDRRKQHEQDRKGKRDQ) are enriched in basic and acidic residues.

The protein belongs to the NUSAP family. As to quaternary structure, interacts with DNA, microtubules, ipo7, kpna2 and kpnb1. Microtubule stabilization is inhibited by ipo7 and kpna2, while microtubule bundling is inhibited by kpnb1. Active GTP-bound ran causes dissociation of ipo7 and kpnb1.

Its subcellular location is the cytoplasm. The protein localises to the nucleus. It localises to the cytoskeleton. The protein resides in the spindle. Functionally, microtubule-associated protein with the capacity to bundle and stabilize microtubules. May associate with chromosomes and promote the organization of meiotic or mitotic spindle microtubules around them. This chain is Nucleolar and spindle-associated protein 1-C (nusap1-c), found in Xenopus laevis (African clawed frog).